Reading from the N-terminus, the 435-residue chain is Xylose isomerase (435 aa).

2 residues coordinate Mg(2+): Asp-306 and Asp-308.

Belongs to the xylose isomerase family. Homotetramer. Mg(2+) serves as cofactor.

Its subcellular location is the cytoplasm. It catalyses the reaction alpha-D-xylose = alpha-D-xylulofuranose. The protein is Xylose isomerase of Brucella melitensis biotype 2 (strain ATCC 23457).